An 89-amino-acid chain; its full sequence is UPF0223 protein BCE_4008 (89 aa).

Belongs to the UPF0223 family.

In Bacillus cereus (strain ATCC 10987 / NRS 248), this protein is UPF0223 protein BCE_4008.